Consider the following 232-residue polypeptide: Large ribosomal subunit protein uL1 (232 aa).

The protein belongs to the universal ribosomal protein uL1 family. In terms of assembly, part of the 50S ribosomal subunit.

In terms of biological role, binds directly to 23S rRNA. The L1 stalk is quite mobile in the ribosome, and is involved in E site tRNA release. Functionally, protein L1 is also a translational repressor protein, it controls the translation of the L11 operon by binding to its mRNA. This Xanthomonas campestris pv. campestris (strain B100) protein is Large ribosomal subunit protein uL1.